We begin with the raw amino-acid sequence, 303 residues long: Kynurenine formamidase (303 aa).

Residues 95-99 carry the HGGXW motif; it reads HGGYW. The active-site Nucleophile is the Ser-164. Residues Asp-247 and His-279 contribute to the active site.

Belongs to the kynurenine formamidase family. In terms of assembly, homodimer.

It is found in the cytoplasm. It localises to the cytosol. The protein resides in the nucleus. The enzyme catalyses N-formyl-L-kynurenine + H2O = L-kynurenine + formate + H(+). The protein operates within amino-acid degradation; L-tryptophan degradation via kynurenine pathway; L-kynurenine from L-tryptophan: step 2/2. Its function is as follows. Catalyzes the hydrolysis of N-formyl-L-kynurenine to L-kynurenine, the second step in the kynurenine pathway of tryptophan degradation. Kynurenine may be further oxidized to nicotinic acid, NAD(H) and NADP(H). Required for elimination of toxic metabolites. The polypeptide is Kynurenine formamidase (Homo sapiens (Human)).